Here is a 75-residue protein sequence, read N- to C-terminus: MEIGLAIGLIVGLSILFTIVGLVVGFFLTKRYFEKQLRENPPINEKMIRAMFLQMGRKPSESHIKSVMRSMKNAK.

The helical transmembrane segment at 7-27 (IGLIVGLSILFTIVGLVVGFF) threads the bilayer.

This sequence belongs to the UPF0154 family.

It is found in the cell membrane. In Mycoplasma mobile (strain ATCC 43663 / 163K / NCTC 11711) (Mesomycoplasma mobile), this protein is UPF0154 protein MMOB4450.